Here is a 1019-residue protein sequence, read N- to C-terminus: Photoactivated adenylate cyclase subunit alpha (1019 aa).

A BLUF 1 domain is found at 55–148; it reads LRRLMYLSAS…GRMYGEWHMK (94 aa). Residues 204–332 enclose the Guanylate cyclase 1 domain; that stretch reads VVTFIYLVEF…DCINTASRIT (129 aa). The 93-residue stretch at 467–559 folds into the BLUF 2 domain; sequence LITLTYISQA…RVYGSPLDMT (93 aa). One can recognise a Guanylate cyclase 2 domain in the interval 615–744; it reads VMLATDICSF…EVSARVMEVE (130 aa). Residues 822–861 form a disordered region; the sequence is GTNAPGRGAPAGGIPSSPKVRPPGRTNSVSSYTPDPNEAL. Over residues 825–839 the composition is skewed to low complexity; it reads APGRGAPAGGIPSSP. The segment covering 846–855 has biased composition (polar residues); that stretch reads RTNSVSSYTP.

The protein belongs to the adenylyl cyclase class-4/guanylyl cyclase family. In terms of assembly, heterotetramer of two alpha and two beta subunits. FAD serves as cofactor.

Its subcellular location is the cell projection. It localises to the cilium. The protein localises to the flagellum. It catalyses the reaction ATP = 3',5'-cyclic AMP + diphosphate. With respect to regulation, activity increased by up to 80-fold under blue light. Its function is as follows. Acts as a blue light photoreceptor for the step-up photophobic response. Mediates photoavoidance. The polypeptide is Photoactivated adenylate cyclase subunit alpha (Euglena gracilis).